Here is a 69-residue protein sequence, read N- to C-terminus: Neuropeptide-like protein 30 (69 aa).

The signal sequence occupies residues Met1–Ala22. A tyrosine amide mark is found at Tyr29, Tyr39, Tyr46, and Tyr53. Tryptophan amide occurs at positions 58 and 67.

Belongs to the YARP (YGGW-amide related peptide) family. In terms of tissue distribution, expressed in hypoderm.

The protein localises to the secreted. In terms of biological role, may have antimicrobial activity. May play a role in response to fungal infection. This Caenorhabditis elegans protein is Neuropeptide-like protein 30 (nlp-30).